Here is a 39-residue protein sequence, read N- to C-terminus: Photosystem II reaction center protein J (39 aa).

The chain crosses the membrane as a helical span at residues leucine 9–tyrosine 29.

The protein belongs to the PsbJ family. PSII is composed of 1 copy each of membrane proteins PsbA, PsbB, PsbC, PsbD, PsbE, PsbF, PsbH, PsbI, PsbJ, PsbK, PsbL, PsbM, PsbT, PsbX, PsbY, PsbZ, Psb30/Ycf12, at least 3 peripheral proteins of the oxygen-evolving complex and a large number of cofactors. It forms dimeric complexes.

The protein resides in the plastid. The protein localises to the chloroplast thylakoid membrane. Functionally, one of the components of the core complex of photosystem II (PSII). PSII is a light-driven water:plastoquinone oxidoreductase that uses light energy to abstract electrons from H(2)O, generating O(2) and a proton gradient subsequently used for ATP formation. It consists of a core antenna complex that captures photons, and an electron transfer chain that converts photonic excitation into a charge separation. This Pyropia yezoensis (Susabi-nori) protein is Photosystem II reaction center protein J.